Here is a 181-residue protein sequence, read N- to C-terminus: Large ribosomal subunit protein uL6 (181 aa).

The protein belongs to the universal ribosomal protein uL6 family. As to quaternary structure, part of the 50S ribosomal subunit.

In terms of biological role, this protein binds to the 23S rRNA, and is important in its secondary structure. It is located near the subunit interface in the base of the L7/L12 stalk, and near the tRNA binding site of the peptidyltransferase center. The chain is Large ribosomal subunit protein uL6 from Coprothermobacter proteolyticus (strain ATCC 35245 / DSM 5265 / OCM 4 / BT).